A 227-amino-acid polypeptide reads, in one-letter code: Lipoprotein-releasing system ATP-binding protein LolD (227 aa).

The ABC transporter domain occupies 6-227 (LKIEGLRKTY…HLEDGVLVER (222 aa)). 43–50 (APSGAGKS) is a binding site for ATP.

The protein belongs to the ABC transporter superfamily. Lipoprotein translocase (TC 3.A.1.125) family. In terms of assembly, the complex is composed of two ATP-binding proteins (LolD) and two transmembrane proteins (LolC and LolE).

The protein localises to the cell inner membrane. Its function is as follows. Part of the ABC transporter complex LolCDE involved in the translocation of mature outer membrane-directed lipoproteins, from the inner membrane to the periplasmic chaperone, LolA. Responsible for the formation of the LolA-lipoprotein complex in an ATP-dependent manner. The sequence is that of Lipoprotein-releasing system ATP-binding protein LolD from Ruegeria sp. (strain TM1040) (Silicibacter sp.).